Consider the following 225-residue polypeptide: Ribose-5-phosphate isomerase A (225 aa).

Residues Ser27–Thr30, Asp82–Asp85, and Lys95–Gly98 contribute to the substrate site. The Proton acceptor role is filled by Glu104. Lys122 serves as a coordination point for substrate.

It belongs to the ribose 5-phosphate isomerase family. In terms of assembly, homodimer.

It catalyses the reaction aldehydo-D-ribose 5-phosphate = D-ribulose 5-phosphate. The protein operates within carbohydrate degradation; pentose phosphate pathway; D-ribose 5-phosphate from D-ribulose 5-phosphate (non-oxidative stage): step 1/1. In terms of biological role, catalyzes the reversible conversion of ribose-5-phosphate to ribulose 5-phosphate. The sequence is that of Ribose-5-phosphate isomerase A from Archaeoglobus fulgidus (strain ATCC 49558 / DSM 4304 / JCM 9628 / NBRC 100126 / VC-16).